The primary structure comprises 427 residues: MDKHEKQKIKKICVIGLGYIGLPTASMLANHGYEVIGVDISEKRVNEIKNGDFKIEEPGLLTLLKGAINSKNLNVKTKAEKADAFIICVPTPAIGCDDGSKKCDLSYVLDAVNSILPYIDEGNLIVIESTIPPETTQKIYDIIDKKVYVAHCPERVLPGKILKELVENDRIIGGINKKSAEMAKEIYKSFVEGKIYITDSNTAEMVKLMENTYRDINIALANEFAKICDEIGVNVWDAIKIANKHPRVNILNPGPGVGGHCISIDPWFIVEKTNNAKFIRSARELNDKMPYYVCNMIISELKNLNIEKPKVTVFGATYKGNVEDTRESPSKKVIDALAEKNIPVSTYDPHANSFEYELHSLEDSIVNSDCIVVLTDHNEFKSFKKEEIDEISKKLKNKLIIDTKNILNHNLWKKAGFKIKLLGNGAW.

NAD(+) is bound by residues Tyr-19, Ile-20, Asp-39, Arg-44, Thr-91, and Thr-130. UDP-N-acetyl-alpha-D-mannosaminouronate-binding residues include Arg-155, Val-156, Lys-207, Asn-211, Arg-214, His-245, Arg-247, and Gly-258. Catalysis depends on Lys-207, which acts as the Proton donor/acceptor. The active-site Nucleophile is the Cys-261. Tyr-318 and Lys-319 together coordinate UDP-N-acetyl-alpha-D-mannosaminouronate. Arg-326 is an NAD(+) binding site. Position 404 (Lys-404) interacts with UDP-N-acetyl-alpha-D-mannosaminouronate.

This sequence belongs to the UDP-glucose/GDP-mannose dehydrogenase family. In terms of assembly, homotetramer; probably dimer of dimers.

It catalyses the reaction UDP-N-acetyl-alpha-D-mannosamine + 2 NAD(+) + H2O = UDP-N-acetyl-alpha-D-mannosaminouronate + 2 NADH + 3 H(+). Its function is as follows. Catalyzes the four-electron oxidation of UDP-N-acetyl-D-mannosamine (UDP-ManNAc), reducing NAD(+) and releasing UDP-N-acetylmannosaminuronic acid (UDP-ManNAcA). The sequence is that of UDP-N-acetyl-D-mannosamine dehydrogenase (wecC) from Methanococcus vannielii (strain ATCC 35089 / DSM 1224 / JCM 13029 / OCM 148 / SB).